Here is a 311-residue protein sequence, read N- to C-terminus: Ribosomal RNA small subunit methyltransferase H (311 aa).

Residues 32-34, aspartate 52, phenylalanine 79, aspartate 100, and glutamine 107 contribute to the S-adenosyl-L-methionine site; that span reads AGH.

Belongs to the methyltransferase superfamily. RsmH family.

The protein localises to the cytoplasm. It carries out the reaction cytidine(1402) in 16S rRNA + S-adenosyl-L-methionine = N(4)-methylcytidine(1402) in 16S rRNA + S-adenosyl-L-homocysteine + H(+). Functionally, specifically methylates the N4 position of cytidine in position 1402 (C1402) of 16S rRNA. In Staphylococcus carnosus (strain TM300), this protein is Ribosomal RNA small subunit methyltransferase H.